The sequence spans 434 residues: Trigger factor (434 aa).

The PPIase FKBP-type domain maps to 161-246 (EDRATLDFTG…LKKVEVRELP (86 aa)).

It belongs to the FKBP-type PPIase family. Tig subfamily.

It localises to the cytoplasm. The catalysed reaction is [protein]-peptidylproline (omega=180) = [protein]-peptidylproline (omega=0). Its function is as follows. Involved in protein export. Acts as a chaperone by maintaining the newly synthesized protein in an open conformation. Functions as a peptidyl-prolyl cis-trans isomerase. In Yersinia pseudotuberculosis serotype O:1b (strain IP 31758), this protein is Trigger factor.